A 210-amino-acid chain; its full sequence is Redox-sensing transcriptional repressor Rex (210 aa).

A DNA-binding region (H-T-H motif) is located at residues 16 to 55; it reads IYMRTLQELLEDDVDVISSERLAKQCGVNPAQIRKDLAYF. 90–95 provides a ligand contact to NAD(+); that stretch reads GLGNLG.

Belongs to the transcriptional regulatory Rex family. As to quaternary structure, homodimer.

It is found in the cytoplasm. In terms of biological role, modulates transcription in response to changes in cellular NADH/NAD(+) redox state. This is Redox-sensing transcriptional repressor Rex from Syntrophobacter fumaroxidans (strain DSM 10017 / MPOB).